The sequence spans 322 residues: Gluconeogenesis factor (322 aa).

This sequence belongs to the gluconeogenesis factor family.

Its subcellular location is the cytoplasm. Required for morphogenesis under gluconeogenic growth conditions. The protein is Gluconeogenesis factor of Listeria monocytogenes serovar 1/2a (strain ATCC BAA-679 / EGD-e).